Reading from the N-terminus, the 494-residue chain is Adenosylhomocysteinase (494 aa).

Substrate contacts are provided by T72, D155, and E217. An NAD(+)-binding site is contributed by T218–T220. Substrate is bound by residues K247 and D251. NAD(+) contacts are provided by residues N252, G281–G286, E304, N339, I360–H362, and N408.

This sequence belongs to the adenosylhomocysteinase family. It depends on NAD(+) as a cofactor.

The protein resides in the cytoplasm. The enzyme catalyses S-adenosyl-L-homocysteine + H2O = L-homocysteine + adenosine. The protein operates within amino-acid biosynthesis; L-homocysteine biosynthesis; L-homocysteine from S-adenosyl-L-homocysteine: step 1/1. May play a key role in the regulation of the intracellular concentration of adenosylhomocysteine. The sequence is that of Adenosylhomocysteinase from Nocardia farcinica (strain IFM 10152).